Here is a 153-residue protein sequence, read N- to C-terminus: MQINIYSIAKKDAKYQALLEELCMQCKQFGVEIKILNLLPQAVLKAQKISSAKAQQSYTQTFLPYIALPTALNLILHPTGHNYDSQSFAKLIESQHIVQFFIGGAFGFEESFVRLGKSVSLSAMTFNHKIAKLVLCEQIYRALSILHSHPYHK.

Residues isoleucine 75, glycine 103, and 121 to 126 (LSAMTF) contribute to the S-adenosyl-L-methionine site.

Belongs to the RNA methyltransferase RlmH family. Homodimer.

Its subcellular location is the cytoplasm. The enzyme catalyses pseudouridine(1915) in 23S rRNA + S-adenosyl-L-methionine = N(3)-methylpseudouridine(1915) in 23S rRNA + S-adenosyl-L-homocysteine + H(+). Functionally, specifically methylates the pseudouridine at position 1915 (m3Psi1915) in 23S rRNA. This Helicobacter hepaticus (strain ATCC 51449 / 3B1) protein is Ribosomal RNA large subunit methyltransferase H.